Here is a 408-residue protein sequence, read N- to C-terminus: Histidine--tRNA ligase (408 aa).

This sequence belongs to the class-II aminoacyl-tRNA synthetase family. Homodimer.

The protein localises to the cytoplasm. It catalyses the reaction tRNA(His) + L-histidine + ATP = L-histidyl-tRNA(His) + AMP + diphosphate + H(+). The sequence is that of Histidine--tRNA ligase from Campylobacter jejuni subsp. jejuni serotype O:6 (strain 81116 / NCTC 11828).